The primary structure comprises 783 residues: Protein SEY1 (783 aa).

Over 1 to 677 (MTSQAIQLID…KRSIVTSSTH (677 aa)) the chain is Cytoplasmic. The GB1/RHD3-type G domain occupies 33-265 (GFNYHVISVF…YLLKPNYHHK (233 aa)). 43–50 (GSQSSGKS) provides a ligand contact to GTP. Residues 449-472 (HEKKLQLRESELNALLSKIKKQLT) are a coiled coil. Residues 678 to 698 (IPIWIYAVIVVLGWNEFMIVI) form a helical membrane-spanning segment. Topologically, residues 699–701 (RNP) are lumenal. Residues 702–722 (LFVTLALLSIVSFYFIQKFGL) form a helical membrane-spanning segment. The Cytoplasmic segment spans residues 723–783 (WGPVMNVVNT…SSSSGNEDSD (61 aa)).

This sequence belongs to the TRAFAC class dynamin-like GTPase superfamily. GB1/RHD3 GTPase family. RHD3 subfamily.

Its subcellular location is the endoplasmic reticulum membrane. Cooperates with the reticulon proteins and tubule-shaping DP1 family proteins to generate and maintain the structure of the tubular endoplasmic reticulum network. Has GTPase activity, which is required for its function in ER organization. In Candida glabrata (strain ATCC 2001 / BCRC 20586 / JCM 3761 / NBRC 0622 / NRRL Y-65 / CBS 138) (Yeast), this protein is Protein SEY1.